The chain runs to 378 residues: uncharacterized protein (378 aa).

The span at 150 to 176 shows a compositional bias: low complexity; sequence TTTATTSNNRFNNNNSNNNNINNNNDN. The segment at 150-187 is disordered; it reads TTTATTSNNRFNNNNSNNNNINNNNDNNNKEQKKESRC. Residues 177–187 show a composition bias toward basic and acidic residues; it reads NNKEQKKESRC.

This is an uncharacterized protein from Dictyostelium discoideum (Social amoeba).